The primary structure comprises 242 residues: Large ribosomal subunit protein uL3 (242 aa).

The residue at position 151 (Gln151) is an N5-methylglutamine.

The protein belongs to the universal ribosomal protein uL3 family. In terms of assembly, part of the 50S ribosomal subunit. Forms a cluster with proteins L14 and L19. In terms of processing, methylated by PrmB.

Its function is as follows. One of the primary rRNA binding proteins, it binds directly near the 3'-end of the 23S rRNA, where it nucleates assembly of the 50S subunit. The polypeptide is Large ribosomal subunit protein uL3 (Zymomonas mobilis subsp. mobilis (strain ATCC 31821 / ZM4 / CP4)).